The primary structure comprises 118 residues: Vitelline membrane protein Vm32E (118 aa).

The signal sequence occupies residues 1–17 (MKIVALTLVAFVALAGA). The 40-residue stretch at 36-75 (GYPAPPCPTNYLFSCQPNLAPAPCAQEAQAPAYGSAGAYT) folds into the VM domain.

The protein belongs to the vitelline membrane family.

It is found in the secreted. Functionally, major early eggshell protein. This chain is Vitelline membrane protein Vm32E, found in Drosophila simulans (Fruit fly).